A 139-amino-acid polypeptide reads, in one-letter code: Natriuretic peptides A (139 aa).

Residues 1–21 (MTALVLWGLLLLLGQHTQVNS) form the signal peptide. Positions 22–114 (HVLGRPFSAS…QDLLMSLRKR (93 aa)) are excised as a propeptide. A disulfide bridge connects residues Cys118 and Cys134.

Belongs to the natriuretic peptide family.

The protein resides in the secreted. In terms of biological role, hormone playing a key role in cardiovascular homeostasis through regulation of natriuresis, diuresis, and vasodilation. Has a cGMP-stimulating activity. The chain is Natriuretic peptides A (nppa) from Takifugu rubripes (Japanese pufferfish).